Here is a 223-residue protein sequence, read N- to C-terminus: Orotate phosphoribosyltransferase (223 aa).

Residues Arg-107, Lys-108, Lys-111, His-113, and 133–141 (EDLTTAGGS) each bind 5-phospho-alpha-D-ribose 1-diphosphate. Thr-137 is an orotate binding site. Positions 192–211 (SPGSRSSSTTRRCRKSSPSS) are enriched in low complexity. The segment at 192 to 212 (SPGSRSSSTTRRCRKSSPSSM) is disordered.

This sequence belongs to the purine/pyrimidine phosphoribosyltransferase family. PyrE subfamily. As to quaternary structure, homodimer. Mg(2+) is required as a cofactor.

It carries out the reaction orotidine 5'-phosphate + diphosphate = orotate + 5-phospho-alpha-D-ribose 1-diphosphate. It participates in pyrimidine metabolism; UMP biosynthesis via de novo pathway; UMP from orotate: step 1/2. Functionally, catalyzes the transfer of a ribosyl phosphate group from 5-phosphoribose 1-diphosphate to orotate, leading to the formation of orotidine monophosphate (OMP). The sequence is that of Orotate phosphoribosyltransferase (pyrE) from Rhizobium leguminosarum bv. trifolii.